The sequence spans 561 residues: Cytochrome P450 monooxygenase avaL (561 aa).

The helical transmembrane segment at 19–39 (IAASCALVCIVSACYVVWSLL) threads the bilayer. Cys-508 lines the heme pocket.

This sequence belongs to the cytochrome P450 family. The cofactor is heme.

The protein resides in the membrane. It functions in the pathway secondary metabolite biosynthesis. Its function is as follows. Cytochrome P450 monooxygenase; part of the cluster that mediates the biosynthesis of a highly modified cyclo-arginine-tryptophan dipeptide (cRW). The first step of the pathway is perfornmed by the arginine-containing cyclodipeptide synthase (RCPDS) avaA that acts as the scaffold-generating enzyme and is responsible for formation of the cyclo-Arg-Trp (cRW) diketopiperazine. AvaB then acts as a multifunctional flavoenzyme that is responsible for generating the cyclo-Arg-formylkynurenine DKP, which can be deformylated by avaC. AvaB then further catalyzes an additional N-oxidation followed by cyclization and dehydration. The next step is an N-acetylation of the guanidine group catalyzed by the arginine N-acetyltransferase avaD. The roles of the additional enzymes identified within the ava cluster still have to be determined. The sequence is that of Cytochrome P450 monooxygenase avaL from Aspergillus versicolor.